Reading from the N-terminus, the 254-residue chain is Pyruvate aldolase (254 aa).

Catalysis depends on His48, which acts as the Proton acceptor. The a divalent metal cation site is built by Glu151 and Asp177.

Belongs to the HpcH/HpaI aldolase family. A divalent metal cation serves as cofactor.

The enzyme catalyses D-glyceraldehyde + pyruvate = 2-dehydro-3-deoxy-L-galactonate. Aldolase which can catalyze in vitro the aldolisation reaction between pyruvate (PA) and D-glyceraldehyde (D-GA) to form 2-dehydro-3-deoxy-L-galactonate. This is Pyruvate aldolase from Rhizobium etli (strain ATCC 51251 / DSM 11541 / JCM 21823 / NBRC 15573 / CFN 42).